Reading from the N-terminus, the 443-residue chain is Protoheme IX farnesyltransferase, mitochondrial (443 aa).

Transmembrane regions (helical) follow at residues 174–194 (AAGF…LTSV), 235–255 (LAVS…TLGV), 257–277 (PLTG…YTPL), 280–300 (ISIA…VMGW), 309–329 (AGAF…FNAL), 364–384 (LLVL…FPIM), and 411–431 (LFFC…TCKR).

This sequence belongs to the UbiA prenyltransferase family.

Its subcellular location is the mitochondrion membrane. The catalysed reaction is heme b + (2E,6E)-farnesyl diphosphate + H2O = Fe(II)-heme o + diphosphate. Its function is as follows. Converts protoheme IX and farnesyl diphosphate to heme O. The protein is Protoheme IX farnesyltransferase, mitochondrial (COX10) of Homo sapiens (Human).